A 345-amino-acid polypeptide reads, in one-letter code: 3-isopropylmalate dehydrogenase (345 aa).

4 residues coordinate substrate: Arg-94, Arg-104, Arg-130, and Asp-215. 3 residues coordinate Mg(2+): Asp-215, Asp-239, and Asp-243. 273–285 is an NAD(+) binding site; that stretch reads GSAPDIAGKGIAN.

Belongs to the isocitrate and isopropylmalate dehydrogenases family. LeuB type 1 subfamily. As to quaternary structure, homodimer. It depends on Mg(2+) as a cofactor. Mn(2+) is required as a cofactor.

Its subcellular location is the cytoplasm. The catalysed reaction is (2R,3S)-3-isopropylmalate + NAD(+) = 4-methyl-2-oxopentanoate + CO2 + NADH. It participates in amino-acid biosynthesis; L-leucine biosynthesis; L-leucine from 3-methyl-2-oxobutanoate: step 3/4. In terms of biological role, catalyzes the oxidation of 3-carboxy-2-hydroxy-4-methylpentanoate (3-isopropylmalate) to 3-carboxy-4-methyl-2-oxopentanoate. The product decarboxylates to 4-methyl-2 oxopentanoate. The sequence is that of 3-isopropylmalate dehydrogenase (leuB) from Lactococcus lactis subsp. lactis (strain IL1403) (Streptococcus lactis).